A 123-amino-acid polypeptide reads, in one-letter code: Small ribosomal subunit protein bS16 (123 aa).

The disordered stretch occupies residues 87–123 (AKNNPIKAKPGKRAQERAAEKAQKAADAAAAAADAAE). Over residues 99 to 110 (RAQERAAEKAQK) the composition is skewed to basic and acidic residues. Positions 111–123 (AADAAAAAADAAE) are enriched in low complexity.

It belongs to the bacterial ribosomal protein bS16 family.

This chain is Small ribosomal subunit protein bS16, found in Rhizobium etli (strain CIAT 652).